The primary structure comprises 89 residues: Small ribosomal subunit protein uS15 (89 aa).

Basic and acidic residues predominate over residues 1 to 18 (MSLDTAEKQKLIENHQVH). The segment at 1 to 23 (MSLDTAEKQKLIENHQVHPTDTG) is disordered.

The protein belongs to the universal ribosomal protein uS15 family. As to quaternary structure, part of the 30S ribosomal subunit. Forms a bridge to the 50S subunit in the 70S ribosome, contacting the 23S rRNA.

One of the primary rRNA binding proteins, it binds directly to 16S rRNA where it helps nucleate assembly of the platform of the 30S subunit by binding and bridging several RNA helices of the 16S rRNA. Functionally, forms an intersubunit bridge (bridge B4) with the 23S rRNA of the 50S subunit in the ribosome. In Prochlorococcus marinus (strain AS9601), this protein is Small ribosomal subunit protein uS15.